Here is a 484-residue protein sequence, read N- to C-terminus: Probable cytochrome P450 508A1 (484 aa).

A helical transmembrane segment spans residues Met-1–Ser-21. Position 428 (Cys-428) interacts with heme.

It belongs to the cytochrome P450 family. The cofactor is heme.

It localises to the membrane. This is Probable cytochrome P450 508A1 (cyp508A1-1) from Dictyostelium discoideum (Social amoeba).